The following is a 333-amino-acid chain: Phosphate acyltransferase (333 aa).

The protein belongs to the PlsX family. Homodimer. Probably interacts with PlsY.

It is found in the cytoplasm. The enzyme catalyses a fatty acyl-[ACP] + phosphate = an acyl phosphate + holo-[ACP]. It functions in the pathway lipid metabolism; phospholipid metabolism. Functionally, catalyzes the reversible formation of acyl-phosphate (acyl-PO(4)) from acyl-[acyl-carrier-protein] (acyl-ACP). This enzyme utilizes acyl-ACP as fatty acyl donor, but not acyl-CoA. This is Phosphate acyltransferase from Lactobacillus helveticus (strain DPC 4571).